A 208-amino-acid chain; its full sequence is Cytochrome c biogenesis ATP-binding export protein CcmA (208 aa).

An ABC transporter domain is found at 2 to 206 (LEAKELTCAR…IRLTAEGRDE (205 aa)). Residue 34–41 (GPNGAGKT) coordinates ATP.

Belongs to the ABC transporter superfamily. CcmA exporter (TC 3.A.1.107) family. The complex is composed of two ATP-binding proteins (CcmA) and two transmembrane proteins (CcmB).

The protein localises to the cell inner membrane. It carries out the reaction heme b(in) + ATP + H2O = heme b(out) + ADP + phosphate + H(+). Its function is as follows. Part of the ABC transporter complex CcmAB involved in the biogenesis of c-type cytochromes; once thought to export heme, this seems not to be the case, but its exact role is uncertain. Responsible for energy coupling to the transport system. The protein is Cytochrome c biogenesis ATP-binding export protein CcmA of Tatumella citrea (Pantoea citrea).